The sequence spans 344 residues: N-acetyl-gamma-glutamyl-phosphate reductase (344 aa).

The active site involves cysteine 148.

Belongs to the NAGSA dehydrogenase family. Type 1 subfamily.

It is found in the cytoplasm. It carries out the reaction N-acetyl-L-glutamate 5-semialdehyde + phosphate + NADP(+) = N-acetyl-L-glutamyl 5-phosphate + NADPH + H(+). The protein operates within amino-acid biosynthesis; L-arginine biosynthesis; N(2)-acetyl-L-ornithine from L-glutamate: step 3/4. Catalyzes the NADPH-dependent reduction of N-acetyl-5-glutamyl phosphate to yield N-acetyl-L-glutamate 5-semialdehyde. This Clostridium kluyveri (strain NBRC 12016) protein is N-acetyl-gamma-glutamyl-phosphate reductase.